Consider the following 427-residue polypeptide: UPF0761 membrane protein Plut_1323 (427 aa).

A run of 6 helical transmembrane segments spans residues 51–71 (LLSI…FAVF), 105–125 (TFTM…VLIS), 147–167 (FTLY…SLAA), 188–208 (LLSL…YLLV), 221–241 (GALV…FYVA), and 251–271 (GALS…VVVL).

The protein belongs to the UPF0761 family.

The protein resides in the cell inner membrane. This is UPF0761 membrane protein Plut_1323 from Chlorobium luteolum (strain DSM 273 / BCRC 81028 / 2530) (Pelodictyon luteolum).